We begin with the raw amino-acid sequence, 185 residues long: MIDETLFDAEEKMEKAVSVARDDLSSIRTGRANPGMFSRINVDYYGATTPITQLSSINVPEARMVVIKPYEANQLRNIEDAIRNSDLGVNPTNDGNIIRVSIPQLTEERRRDLVKQAKAKGEDAKVSVRNIRRKAMEELARIKKDGEAGEDEVSRAEKDLDKTTHTYTHQIDELVKHKEGELLEV.

The segment at 145-164 is disordered; sequence DGEAGEDEVSRAEKDLDKTT.

Belongs to the RRF family.

The protein localises to the cytoplasm. Its function is as follows. Responsible for the release of ribosomes from messenger RNA at the termination of protein biosynthesis. May increase the efficiency of translation by recycling ribosomes from one round of translation to another. This chain is Ribosome-recycling factor, found in Mycobacterium sp. (strain JLS).